The chain runs to 705 residues: Ion-translocating oxidoreductase complex subunit C (705 aa).

2 consecutive 4Fe-4S ferredoxin-type domains span residues 368 to 397 and 407 to 435; these read MGETPEEQGCIRCSACADACPADLLPQQLY and KATAHNIADCIECGACAWVCPSSIPLVQY. The [4Fe-4S] cluster site is built by Cys377, Cys380, Cys383, Cys387, Cys416, Cys419, Cys422, and Cys426. The segment at 536–684 is disordered; the sequence is RARQAENIPA…EPVDPRKAAV (149 aa).

Belongs to the 4Fe4S bacterial-type ferredoxin family. RnfC subfamily. In terms of assembly, the complex is composed of six subunits: RnfA, RnfB, RnfC, RnfD, RnfE and RnfG. [4Fe-4S] cluster serves as cofactor.

It localises to the cell inner membrane. Part of a membrane-bound complex that couples electron transfer with translocation of ions across the membrane. This Citrobacter koseri (strain ATCC BAA-895 / CDC 4225-83 / SGSC4696) protein is Ion-translocating oxidoreductase complex subunit C.